The sequence spans 279 residues: Phycobilisome 34.5 kDa linker polypeptide, phycoerythrocyanin-associated, rod (279 aa).

Residues 2–178 form the PBS-linker domain; that stretch reads STSVAERLAI…LYRGRANSDN (177 aa). A CpcD-like domain is found at 226-278; sequence ARMFIVEAIAGTLNTNVAVRRSRQVYTVPYDRLSATYQEIHKRGGKIVKITPA.

Belongs to the phycobilisome linker protein family.

Its subcellular location is the cellular thylakoid membrane. Its function is as follows. Rod linker protein, associated with phycoerythrocyanin. Linker polypeptides determine the state of aggregation and the location of the disk-shaped phycobiliprotein units within the phycobilisome and modulate their spectroscopic properties in order to mediate a directed and optimal energy transfer. This is Phycobilisome 34.5 kDa linker polypeptide, phycoerythrocyanin-associated, rod (pecC) from Mastigocladus laminosus (Fischerella sp.).